A 1116-amino-acid chain; its full sequence is DUB-associated factor 1 (1116 aa).

WD repeat units lie at residues 21–62, 91–132, 160–200, 219–262, 266–305, 387–426, and 428–466; these read AHIL…NEPE, KNSD…DHDD, VHDG…EKMA, SMSP…EVIR, AHRT…DQTT, KKYG…FSVN, and GGFA…LLNT. The disordered stretch occupies residues 578-600; that stretch reads LDTGYNSESKKNNKDKKRKSTFK. Serine 668 is modified (phosphoserine). Threonine 693 bears the Phosphothreonine mark. Positions 747 to 776 are enriched in polar residues; the sequence is ISSQDLPSNNTHNKLRSSENSRANSTSTLE. 2 disordered regions span residues 747 to 784 and 963 to 994; these read ISSQ…KKPE and FISA…PSTQ. The segment covering 967 to 987 has biased composition (low complexity); it reads SDTTESSGNDSSDSSLGNGNE.

As to quaternary structure, interacts (via its WD repeats) with ubiquitin.

The protein localises to the cytoplasm. Functionally, ubiquitin-binding protein involved in the resistance to phenanthroline, sanguinarine, nordihydroguaiaretic acid (NDGA), isopropyl (N-3-chloro-phenyl)-carbamate (IPCPC) and guanosine 5'-O-(2-thiodiphosphate). This is DUB-associated factor 1 from Saccharomyces cerevisiae (strain ATCC 204508 / S288c) (Baker's yeast).